We begin with the raw amino-acid sequence, 447 residues long: tRNA-2-methylthio-N(6)-dimethylallyladenosine synthase (447 aa).

The MTTase N-terminal domain occupies 4–120 (RSFFIKTYGC…INELLERSRT (117 aa)). [4Fe-4S] cluster contacts are provided by Cys-13, Cys-49, Cys-83, Cys-161, Cys-165, and Cys-168. In terms of domain architecture, Radical SAM core spans 147 to 382 (HEGEFRKFVT…QARQDEIGLE (236 aa)). Positions 385-446 (QEYIGTTQEV…QHSLRGSIVE (62 aa)) constitute a TRAM domain.

It belongs to the methylthiotransferase family. MiaB subfamily. As to quaternary structure, monomer. [4Fe-4S] cluster is required as a cofactor.

The protein localises to the cytoplasm. The catalysed reaction is N(6)-dimethylallyladenosine(37) in tRNA + (sulfur carrier)-SH + AH2 + 2 S-adenosyl-L-methionine = 2-methylsulfanyl-N(6)-dimethylallyladenosine(37) in tRNA + (sulfur carrier)-H + 5'-deoxyadenosine + L-methionine + A + S-adenosyl-L-homocysteine + 2 H(+). In terms of biological role, catalyzes the methylthiolation of N6-(dimethylallyl)adenosine (i(6)A), leading to the formation of 2-methylthio-N6-(dimethylallyl)adenosine (ms(2)i(6)A) at position 37 in tRNAs that read codons beginning with uridine. In Desulfotalea psychrophila (strain LSv54 / DSM 12343), this protein is tRNA-2-methylthio-N(6)-dimethylallyladenosine synthase.